Consider the following 535-residue polypeptide: Pescadillo homolog (535 aa).

The BRCT domain occupies 314–406 (KRKQLFANYR…SCLSIKKYLP (93 aa)).

Belongs to the pescadillo family.

Its subcellular location is the nucleus. The protein resides in the nucleolus. The protein localises to the nucleoplasm. Functionally, required for maturation of ribosomal RNAs and formation of the large ribosomal subunit. The protein is Pescadillo homolog of Brugia malayi (Filarial nematode worm).